We begin with the raw amino-acid sequence, 305 residues long: Carbamate kinase (305 aa).

Belongs to the carbamate kinase family.

It is found in the cytoplasm. It carries out the reaction hydrogencarbonate + NH4(+) + ATP = carbamoyl phosphate + ADP + H2O + H(+). It participates in metabolic intermediate metabolism; carbamoyl phosphate degradation; CO(2) and NH(3) from carbamoyl phosphate: step 1/1. The polypeptide is Carbamate kinase (arcC) (Thermoplasma volcanium (strain ATCC 51530 / DSM 4299 / JCM 9571 / NBRC 15438 / GSS1)).